The chain runs to 168 residues: Histone doublet miniH2B-H2A (168 aa).

It is found in the host nucleus. The protein localises to the host cytoplasm. It localises to the virion. Its function is as follows. Histone-like protein that is recruited to viral factories during viral replication and participates in viral DNA packaging and virion production probably by forming unstable nucleosome-like particles. May compact the viral DNA. The polypeptide is Histone doublet miniH2B-H2A (Melbournevirus (MelV)).